We begin with the raw amino-acid sequence, 466 residues long: MRFKISLTTRLSLIFSAVMLTVWWLSSFILISTLNDYFDNQDRDFLTGKLQLTEEFLKTETFRNKTDIKSLSEKINDAMVGHNGLFISIKNMENEKIVELYAKNSVVPAVLLNKSGDILDYMIQTEENNTVYRSISRRVAVTPEQGKSKHVIITVATDTGYHTLLMDKLSTWLFWFNIGLVFISVFLGWLTTRIGLKPLREMTSLASSMTVHSLDQRLNPDLAPPEISETMQEFNNMFDRLEGAFRKLSDFSSDIAHELRTPVSNLMMQTQFALAKERDVSHYREILFANLEELKRLSRMTSDMLFLARSEHGLLRLDKHDVDLAAELNELRELFEPLADETGKTITVEGEGVVAGDSDMLRRAFSNLLSNAIKYSPDNTCTAIHLERDSDCVNVMITNTMSGQVPANLERLFDRFYRADSSRFYNTEGAGLGLSITRSIIHAHGGELSAEQQGREIVFKVRLLMD.

Over 1–10 the chain is Cytoplasmic; that stretch reads MRFKISLTTR. Residues 11 to 31 traverse the membrane as a helical segment; it reads LSLIFSAVMLTVWWLSSFILI. The Periplasmic segment spans residues 32–171; sequence STLNDYFDNQ…HTLLMDKLST (140 aa). The chain crosses the membrane as a helical span at residues 172 to 192; sequence WLFWFNIGLVFISVFLGWLTT. In terms of domain architecture, HAMP spans 193-246; sequence RIGLKPLREMTSLASSMTVHSLDQRLNPDLAPPEISETMQEFNNMFDRLEGAFR. Residues 193–466 are Cytoplasmic-facing; it reads RIGLKPLREM…IVFKVRLLMD (274 aa). A Histidine kinase domain is found at 254-466; that stretch reads DIAHELRTPV…IVFKVRLLMD (213 aa). Residue His-257 is modified to Phosphohistidine; by autocatalysis.

Its subcellular location is the cell inner membrane. The enzyme catalyses ATP + protein L-histidine = ADP + protein N-phospho-L-histidine.. Probable member of a two-component regulatory system PcoS/PcoR. May activate PcoR by phosphorylation. The chain is Probable sensor protein PcoS (pcoS) from Escherichia coli.